We begin with the raw amino-acid sequence, 386 residues long: MSFPADSVGLVTPQKFQFEEPLHLECGRVLPRFELMVETYGTLNADKSNAILICHALSGHHHAAGYHHEDDKKAGWWDSCIGPGKAIDTNKFFVVALNNIGGCSGSTGPTSPNPENDNRPYGPDFPLVTVRDWVKTQAMLSDRLGISVWYAVVGGSLGGMQALQWSVDYPDRLQKCVVIASAPKLSAQNIAFNEVARQSILSDPDFHHGRYLEKDSYPKRGLILARMVGHITYLSEEAMKQKFGRDLKSGKFMYGFDVEFQVESYLRYQGEQFSRNFDANTYLIMTKALDYFDPSREYGHSLTEAMSKTKCQFLIVSFTTDWRFAPSRSQEIVDALITNQKPVSYLDIDAEQGHDSFLFPIPLYVKTLRAFLGGEEHLKSTSLEAS.

The AB hydrolase-1 domain occupies 49–358 (NAILICHALS…DAEQGHDSFL (310 aa)). The Nucleophile role is filled by S156. Substrate is bound at residue R226. Residues D321 and H354 contribute to the active site. D355 contacts substrate.

Belongs to the AB hydrolase superfamily. MetX family. In terms of assembly, homodimer.

The protein resides in the cytoplasm. It carries out the reaction L-homoserine + succinyl-CoA = O-succinyl-L-homoserine + CoA. The protein operates within amino-acid biosynthesis; L-methionine biosynthesis via de novo pathway; O-succinyl-L-homoserine from L-homoserine: step 1/1. In terms of biological role, transfers a succinyl group from succinyl-CoA to L-homoserine, forming succinyl-L-homoserine. This chain is Homoserine O-succinyltransferase, found in Acinetobacter baumannii (strain AB307-0294).